The primary structure comprises 240 residues: Probable Ni/Fe-hydrogenase B-type cytochrome subunit (240 aa).

The next 4 membrane-spanning stretches (helical) occupy residues 31–51, 75–95, 142–163, and 196–213; these read LWHW…YFIG, FAAG…AFVG, LAMF…FALY, and LGMW…YLAV.

Belongs to the HupC/HyaC/HydC family.

Its subcellular location is the cell membrane. Its function is as follows. Probable b-type cytochrome. The sequence is that of Probable Ni/Fe-hydrogenase B-type cytochrome subunit (hoxZ) from Azotobacter vinelandii.